An 81-amino-acid polypeptide reads, in one-letter code: Probable antitoxin MazE2 (81 aa).

In terms of assembly, forms a complex with cognate toxin MazF2.

Functionally, antitoxin component of a type II toxin-antitoxin (TA) system. In Mycobacterium tuberculosis (strain ATCC 25618 / H37Rv), this protein is Probable antitoxin MazE2 (mazE2).